We begin with the raw amino-acid sequence, 341 residues long: tRNA N6-adenosine threonylcarbamoyltransferase (341 aa).

Residues His111 and His115 each coordinate Fe cation. Residues 134–138, Asp167, Gly180, and Asn272 each bind substrate; that span reads LVSGG. Asp300 provides a ligand contact to Fe cation.

This sequence belongs to the KAE1 / TsaD family. It depends on Fe(2+) as a cofactor.

It localises to the cytoplasm. It catalyses the reaction L-threonylcarbamoyladenylate + adenosine(37) in tRNA = N(6)-L-threonylcarbamoyladenosine(37) in tRNA + AMP + H(+). Its function is as follows. Required for the formation of a threonylcarbamoyl group on adenosine at position 37 (t(6)A37) in tRNAs that read codons beginning with adenine. Is involved in the transfer of the threonylcarbamoyl moiety of threonylcarbamoyl-AMP (TC-AMP) to the N6 group of A37, together with TsaE and TsaB. TsaD likely plays a direct catalytic role in this reaction. The sequence is that of tRNA N6-adenosine threonylcarbamoyltransferase from Edwardsiella ictaluri (strain 93-146).